Consider the following 47-residue polypeptide: Delta-actitoxin-Aspp1b (47 aa).

Disulfide bonds link cysteine 4-cysteine 44, cysteine 6-cysteine 34, and cysteine 27-cysteine 45.

Belongs to the sea anemone sodium channel inhibitory toxin family. Type I subfamily.

It is found in the secreted. The protein resides in the nematocyst. Binds specifically to voltage-gated sodium channels (Nav), thereby delaying their inactivation during signal transduction. Has a longer mammalian heart stimulation effect than Hk2a, Hk8a and Hk16a. The chain is Delta-actitoxin-Aspp1b from Anthopleura sp. (strain 'Zhanjiang') (Sea anemone).